Here is a 1428-residue protein sequence, read N- to C-terminus: DNA-directed RNA polymerase subunit beta' (1428 aa).

Zn(2+) is bound by residues Cys-66, Cys-68, Cys-81, and Cys-84. Residues Asp-472, Asp-474, and Asp-476 each contribute to the Mg(2+) site. 4 residues coordinate Zn(2+): Cys-816, Cys-890, Cys-897, and Cys-900.

The protein belongs to the RNA polymerase beta' chain family. The RNAP catalytic core consists of 2 alpha, 1 beta, 1 beta' and 1 omega subunit. When a sigma factor is associated with the core the holoenzyme is formed, which can initiate transcription. Requires Mg(2+) as cofactor. The cofactor is Zn(2+).

The enzyme catalyses RNA(n) + a ribonucleoside 5'-triphosphate = RNA(n+1) + diphosphate. Its function is as follows. DNA-dependent RNA polymerase catalyzes the transcription of DNA into RNA using the four ribonucleoside triphosphates as substrates. The protein is DNA-directed RNA polymerase subunit beta' of Phocaeicola vulgatus (strain ATCC 8482 / DSM 1447 / JCM 5826 / CCUG 4940 / NBRC 14291 / NCTC 11154) (Bacteroides vulgatus).